The primary structure comprises 894 residues: B-cell lymphoma/leukemia 11B (894 aa).

Phosphoserine is present on residues Ser-97 and Ser-110. Residue Thr-120 is modified to Phosphothreonine. Ser-129 carries the post-translational modification Phosphoserine. Lys-137 participates in a covalent cross-link: Glycyl lysine isopeptide (Lys-Gly) (interchain with G-Cter in SUMO2). The segment at 221–251 (YICTTCKQPFNSAWFLLQHAQNTHGFRIYLE) adopts a C2H2-type 1 zinc-finger fold. At Ser-256 the chain carries Phosphoserine. Position 260 is a phosphothreonine (Thr-260). Ser-277 is subject to Phosphoserine. Omega-N-methylarginine is present on Arg-293. Residue Arg-322 is modified to Asymmetric dimethylarginine. Position 358 is a phosphoserine (Ser-358). Disordered regions lie at residues 370–428 (LAGN…KSKS) and 471–583 (KRHM…GGGA). At Thr-376 the chain carries Phosphothreonine. Ser-381, Ser-398, and Ser-401 each carry phosphoserine. Over residues 396–423 (QPSPKSPFLSTPPLPPMPPGGTPPPQPP) the composition is skewed to pro residues. Residues Thr-406 and Thr-417 each carry the phosphothreonine modification. 2 consecutive C2H2-type zinc fingers follow at residues 427 to 454 (KSCE…GEKP) and 455 to 482 (YKCQ…HKAG). The segment covering 471-480 (KRHMKTHMHK) has biased composition (basic residues). Residues Ser-483, Ser-488, Ser-496, and Ser-497 each carry the phosphoserine modification. Over residues 511-529 (KAADGDFRHHESDPSLGHE) the composition is skewed to basic and acidic residues. A compositionally biased stretch (acidic residues) spans 530–546 (PEEEDEEEEEEEEELLL). The span at 568–583 (NGGGGVPGVPGAGGGA) shows a compositional bias: gly residues. Glycyl lysine isopeptide (Lys-Gly) (interchain with G-Cter in SUMO2) cross-links involve residues Lys-591 and Lys-617. The disordered stretch occupies residues 653–680 (GRGGGFAPGTEPFPGLFPRKPAPLPSPG). At Ser-678 the chain carries Phosphoserine. Residues Lys-686 and Lys-723 each participate in a glycyl lysine isopeptide (Lys-Gly) (interchain with G-Cter in SUMO2) cross-link. The span at 737 to 752 (FATSSEHSSENGSLRF) shows a compositional bias: polar residues. The tract at residues 737-794 (FATSSEHSSENGSLRFSTPPGDLLDGGLSGRSGTASGGSTPHLGGPGPGRPSSKEGRR) is disordered. Residues 753–775 (STPPGDLLDGGLSGRSGTASGGS) show a composition bias toward low complexity. Thr-754 carries the phosphothreonine modification. Phosphoserine occurs at positions 765 and 772. 3 C2H2-type zinc fingers span residues 796–823 (DTCE…GERP), 824–853 (YKCE…GKEV), and 854–884 (YRCD…LLTN). Lys-851 is subject to N6-acetyllysine. Lys-887 participates in a covalent cross-link: Glycyl lysine isopeptide (Lys-Gly) (interchain with G-Cter in SUMO2).

As to quaternary structure, interacts with TFCOUP1, SIRT1, ARP1 and EAR2. Interacts with EP300; the interaction is detected in activated T-lymphocytes, but not under resting conditions. In terms of processing, sumoylated with SUMO1. In terms of tissue distribution, highly expressed in brain and in malignant T-cell lines derived from patients with adult T-cell leukemia/lymphoma.

It localises to the nucleus. Key regulator of both differentiation and survival of T-lymphocytes during thymocyte development in mammals. Essential in controlling the responsiveness of hematopoietic stem cells to chemotactic signals by modulating the expression of the receptors CCR7 and CCR9, which direct the movement of progenitor cells from the bone marrow to the thymus. Is a regulator of IL2 promoter and enhances IL2 expression in activated CD4(+) T-lymphocytes. Tumor-suppressor that represses transcription through direct, TFCOUP2-independent binding to a GC-rich response element. May also function in the P53-signaling pathway. This Homo sapiens (Human) protein is B-cell lymphoma/leukemia 11B (BCL11B).